A 413-amino-acid polypeptide reads, in one-letter code: MVATAVTSAFFPVTSSPDSSDSKNKKLGSIKSKPSVSSGSLQVKANAQAPPKINGTVASTTPVEGSKNDDGASSPPPRTFINQLPDWSMLLAAITTIFLAAEKQWMMLDWKPRRPDMVIDPFGIGKIVQDGLVFSQNFSIRSYEIGADQTASIETLMNHLQETAINHCRSAGLLGEGFGATPEMCKKNLIWVVTRMQVVVDRYPTWGDVVQVDTWVSASGKNGMRRDWLVSNSETGEILTRATSVWVMMNKLTRRLSKIPEEVRGEIEPFFMNSDPVLAEDSQKLVKLDDSTAEHVCKGLTPKWSDLDVNQHVNNVKYIGWILESAPLPILESHELSALTLEYRRECGRDSVLQSLTTVSDSNTENAVNVGEFNCQHLLRLDDGAEIVRGRTRWRPKHAKSSANMDQITAKRA.

The N-terminal 57 residues, 1–57 (MVATAVTSAFFPVTSSPDSSDSKNKKLGSIKSKPSVSSGSLQVKANAQAPPKINGTV), are a transit peptide targeting the chloroplast. The disordered stretch occupies residues 12–79 (PVTSSPDSSD…DGASSPPPRT (68 aa)). The span at 29 to 40 (SIKSKPSVSSGS) shows a compositional bias: low complexity. Catalysis depends on residues N310, H312, and C347. Positions 394-413 (WRPKHAKSSANMDQITAKRA) are disordered.

The protein belongs to the acyl-ACP thioesterase family.

The protein localises to the plastid. Its subcellular location is the chloroplast. The enzyme catalyses hexadecanoyl-[ACP] + H2O = hexadecanoate + holo-[ACP] + H(+). Its function is as follows. Plays an essential role in chain termination during de novo fatty acid synthesis. High thioesterase activity for palmitoyl-ACP versus other acyl-ACPs. In Gossypium hirsutum (Upland cotton), this protein is Palmitoyl-acyl carrier protein thioesterase, chloroplastic (FATB1).